A 222-amino-acid polypeptide reads, in one-letter code: Deoxyribose-phosphate aldolase (222 aa).

Asp-94 acts as the Proton donor/acceptor in catalysis. The active-site Schiff-base intermediate with acetaldehyde is the Lys-156. The Proton donor/acceptor role is filled by Lys-185.

The protein belongs to the DeoC/FbaB aldolase family. DeoC type 1 subfamily.

The protein resides in the cytoplasm. It carries out the reaction 2-deoxy-D-ribose 5-phosphate = D-glyceraldehyde 3-phosphate + acetaldehyde. It functions in the pathway carbohydrate degradation; 2-deoxy-D-ribose 1-phosphate degradation; D-glyceraldehyde 3-phosphate and acetaldehyde from 2-deoxy-alpha-D-ribose 1-phosphate: step 2/2. Catalyzes a reversible aldol reaction between acetaldehyde and D-glyceraldehyde 3-phosphate to generate 2-deoxy-D-ribose 5-phosphate. The polypeptide is Deoxyribose-phosphate aldolase (Malacoplasma penetrans (strain HF-2) (Mycoplasma penetrans)).